Here is a 347-residue protein sequence, read N- to C-terminus: Ribosomal RNA large subunit methyltransferase M (347 aa).

S-adenosyl-L-methionine is bound by residues serine 184, 217–220, aspartate 236, aspartate 256, and aspartate 272; that span reads APGG. Residue lysine 301 is the Proton acceptor of the active site.

The protein belongs to the class I-like SAM-binding methyltransferase superfamily. RNA methyltransferase RlmE family. RlmM subfamily. As to quaternary structure, monomer.

It localises to the cytoplasm. The enzyme catalyses cytidine(2498) in 23S rRNA + S-adenosyl-L-methionine = 2'-O-methylcytidine(2498) in 23S rRNA + S-adenosyl-L-homocysteine + H(+). In terms of biological role, catalyzes the 2'-O-methylation at nucleotide C2498 in 23S rRNA. The polypeptide is Ribosomal RNA large subunit methyltransferase M (Xanthomonas euvesicatoria pv. vesicatoria (strain 85-10) (Xanthomonas campestris pv. vesicatoria)).